Consider the following 403-residue polypeptide: Na(+)/H(+) antiporter NhaH (403 aa).

12 helical membrane passes run 7–27 (VFIQ…IAKL), 34–54 (VALV…IEEA), 99–119 (LAFL…YFLL), 125–145 (VAFT…LSIF), 168–188 (IAVV…EMGW), 196–216 (FMFL…GYVF), 228–245 (LEVA…FIAE), 250–272 (SGVI…IGMS), 282–302 (FWDS…GLEI), 311–331 (WGYI…AVYI), 345–365 (ILIN…LSLP), and 373–393 (QVLL…GLTL).

Belongs to the monovalent cation:proton antiporter 1 (CPA1) transporter (TC 2.A.36) family.

The protein resides in the cell membrane. Its function is as follows. Na(+)/H(+) antiporter that extrudes sodium in exchange for external protons. Can also transport lithium. This chain is Na(+)/H(+) antiporter NhaH (nhaH), found in Halobacillus aidingensis.